The primary structure comprises 621 residues: MIATGGLLRISARKQDPLRPPSQIPKRKRKAKKRRKNDVVVVKGKLKLCSISGLIALCGILVLLVGIAMAVVGYWPKATGTNREGGKQLPPAGSSHRVPTTANSSSSGSKNRSRSHPRAPGGVNSSSAGAPRSTPPARAASPSSSSTSVGFFFRIFSGYLHSDKLKVFGPLIMGIGIFLFICANAVLHENRDKKTKIINLRDLYSTVIDVHSLRAKDLAAAAAAAAAAAASSSSSAPAAAPPGAIPLNGFLSYVQSRGLELKPGGCGGSGDAFGAAAMLAKGSWPPHPAAPSGGRPRGAASPPDLASSPRCPREPPSLAEAVYSVYRERSGVAGSRRAAAATAAAAASSCSSPAPCSPPESWGRQSTASSFVDSSLSAFALLPLQGGRDRGGDAEGASCSWQRPPGERGSQEIPRGELDLSMTNLRGAEGSMRGARREPEEPEGAVAARAARGQGGRLPRTGRYAALRRRSTSGLPDYRAPPSPEPPPSPGSADPDSSPLAKAASPSPPLRLEGSPPTRRDSGSSQSDDPSSSNKGYTPLREAGTSTESVLDAVAGQTRDSAVAAPVLGAEQSSPEGASQEPPTAEQPQPVQRQFTNKEKLIMISRSHAIGVEEELESTGI.

Residues 12 to 37 form a disordered region; it reads ARKQDPLRPPSQIPKRKRKAKKRRKN. The span at 25 to 36 shows a compositional bias: basic residues; sequence PKRKRKAKKRRK. Residues 53–73 form a helical membrane-spanning segment; that stretch reads GLIALCGILVLLVGIAMAVVG. Residues 80–147 are disordered; that stretch reads GTNREGGKQL…RAASPSSSST (68 aa). The span at 125 to 147 shows a compositional bias: low complexity; sequence SSSAGAPRSTPPARAASPSSSST. Residues 167–187 form a helical membrane-spanning segment; that stretch reads VFGPLIMGIGIFLFICANAVL. Disordered regions lie at residues 284–315, 347–368, and 384–598; these read WPPH…PREP, ASSC…QSTA, and LQGG…FTNK. Residues 290–303 are compositionally biased toward low complexity; it reads APSGGRPRGAASPP. Residues 405–418 show a composition bias toward basic and acidic residues; it reads PGERGSQEIPRGEL. Residues 479–490 are compositionally biased toward pro residues; it reads RAPPSPEPPPSP. Low complexity-rich tracts occupy residues 491-505 and 523-533; these read GSAD…KAAS and GSSQSDDPSSS. Polar residues predominate over residues 586–595; that stretch reads EQPQPVQRQF.

Belongs to the TMEM200 family.

The protein localises to the membrane. The sequence is that of Transmembrane protein 200C (TMEM200C) from Homo sapiens (Human).